A 31-amino-acid polypeptide reads, in one-letter code: Photosystem II reaction center protein T (31 aa).

A helical transmembrane segment spans residues 3 to 23 (ALVYTFLLVTTLGILFFSIIF).

Belongs to the PsbT family. PSII is composed of 1 copy each of membrane proteins PsbA, PsbB, PsbC, PsbD, PsbE, PsbF, PsbH, PsbI, PsbJ, PsbK, PsbL, PsbM, PsbT, PsbX, PsbY, PsbZ, Psb30/Ycf12, at least 3 peripheral proteins of the oxygen-evolving complex and a large number of cofactors. It forms dimeric complexes.

The protein localises to the plastid. It is found in the cyanelle thylakoid membrane. Its function is as follows. Found at the monomer-monomer interface of the photosystem II (PS II) dimer, plays a role in assembly and dimerization of PSII. PSII is a light-driven water plastoquinone oxidoreductase, using light energy to abstract electrons from H(2)O, generating a proton gradient subsequently used for ATP formation. The protein is Photosystem II reaction center protein T of Cyanophora paradoxa.